Reading from the N-terminus, the 696-residue chain is Elongation factor G (696 aa).

The tr-type G domain maps to 8 to 290; sequence ERYRNIGVMA…AVLDYLPSPA (283 aa). GTP contacts are provided by residues 17–24, 88–92, and 142–145; these read AHIDAGKT, DTPGH, and NKMD.

This sequence belongs to the TRAFAC class translation factor GTPase superfamily. Classic translation factor GTPase family. EF-G/EF-2 subfamily.

Its subcellular location is the cytoplasm. Its function is as follows. Catalyzes the GTP-dependent ribosomal translocation step during translation elongation. During this step, the ribosome changes from the pre-translocational (PRE) to the post-translocational (POST) state as the newly formed A-site-bound peptidyl-tRNA and P-site-bound deacylated tRNA move to the P and E sites, respectively. Catalyzes the coordinated movement of the two tRNA molecules, the mRNA and conformational changes in the ribosome. In Nitrosospira multiformis (strain ATCC 25196 / NCIMB 11849 / C 71), this protein is Elongation factor G.